The sequence spans 182 residues: uncharacterized protein (182 aa).

A run of 2 helical transmembrane segments spans residues 29-49 and 63-83; these read IISG…AGLP and FYFP…MLTL.

The protein resides in the cell membrane. This is an uncharacterized protein from Ureaplasma parvum serovar 3 (strain ATCC 700970).